The chain runs to 147 residues: Hemoglobin subunit epsilon (147 aa).

In terms of domain architecture, Globin spans 3-147; the sequence is HFTAEEKAAV…VAIALAHKYH (145 aa). 2 positions are modified to phosphoserine: Ser14 and Ser51. Positions 64 and 93 each coordinate heme b.

The protein belongs to the globin family. Heterotetramer of two alpha chains and two epsilon chains in early embryonic hemoglobin Gower-2; two zeta chains and two epsilon chains in early embryonic hemoglobin Gower-1. As to expression, red blood cells.

Its function is as follows. The epsilon chain is a beta-type chain of early mammalian embryonic hemoglobin. In Pan paniscus (Pygmy chimpanzee), this protein is Hemoglobin subunit epsilon (HBE1).